A 1017-amino-acid polypeptide reads, in one-letter code: Disease resistance protein RML1B (1017 aa).

A TIR domain is found at 12–176 (YKFNVFASFH…KIARDVLDKL (165 aa)). Residue Glu-87 is part of the active site. The NB-ARC domain occupies 191–447 (EAHLREIKSL…HIAIFFNKED (257 aa)). LRR repeat units lie at residues 539 to 562 (ISRISEVSIRKKAFKRMPNLQFLK), 583 to 605 (PCLLRLLDWKAYPSKSLPPTFNP), 606 to 628 (EHLVELNMHSSQLEYLWQGTQPL), 629 to 652 (KNLKKMDLSQSKNLKQLPDLSNAT), 654 to 675 (LEYLYLMGCESLIEIPSSISHL), 676 to 698 (HKLEMLATVGCINLEVIPAHMNL), 699 to 724 (ESLQTVYLGGCSRLRNIPVMSTNIRY), 738 to 760 (CPGLKTLDVSGSRNFKGLLTHLP), 761 to 782 (TSLTTLNLCYTDIERIPDCFKS), and 784 to 809 (HQLKGVNLRGCRRLASLPELPRSLLT).

The enzyme catalyses NAD(+) + H2O = ADP-D-ribose + nicotinamide + H(+). Its function is as follows. TIR-NB-LRR receptor-like protein that confers resistance to the pathogen Leptosphaeria maculans (blackleg disease). The polypeptide is Disease resistance protein RML1B (Arabidopsis thaliana (Mouse-ear cress)).